A 186-amino-acid polypeptide reads, in one-letter code: UPF0157 protein SCO7215 (186 aa).

The protein belongs to the UPF0157 (GrpB) family.

The sequence is that of UPF0157 protein SCO7215 from Streptomyces coelicolor (strain ATCC BAA-471 / A3(2) / M145).